The following is a 353-amino-acid chain: 3'-5' exonuclease (353 aa).

Residues methionine 1–lysine 119 form a disordered region. Composition is skewed to basic and acidic residues over residues lysine 13–lysine 30 and lysine 37–alanine 50. A compositionally biased stretch (basic residues) spans threonine 59 to arginine 70. Over residues lysine 71–proline 90 the composition is skewed to basic and acidic residues. Residues serine 103, serine 109, and serine 111 each carry the phosphoserine modification. In terms of domain architecture, 3'-5' exonuclease spans valine 145–arginine 313. Positions 162, 164, and 300 each coordinate Mg(2+).

Belongs to the WRNexo family.

Its subcellular location is the nucleus. Its function is as follows. Has exonuclease activity on both single-stranded and duplex templates bearing overhangs, but not blunt ended duplex DNA, and cleaves in a 3'-5' direction. Essential for the formation of DNA replication focal centers. Has an important role in maintaining genome stability. This is 3'-5' exonuclease from Drosophila melanogaster (Fruit fly).